The chain runs to 274 residues: NH(3)-dependent NAD(+) synthetase (274 aa).

Residue 46-53 (GISGGQDS) coordinates ATP. Aspartate 52 serves as a coordination point for Mg(2+). Arginine 140 serves as a coordination point for deamido-NAD(+). Threonine 160 contacts ATP. Residue glutamate 165 coordinates Mg(2+). Residues lysine 173 and aspartate 180 each contribute to the deamido-NAD(+) site. Residues lysine 189 and threonine 211 each coordinate ATP. Residue 260–261 (HK) participates in deamido-NAD(+) binding.

This sequence belongs to the NAD synthetase family. In terms of assembly, homodimer.

It catalyses the reaction deamido-NAD(+) + NH4(+) + ATP = AMP + diphosphate + NAD(+) + H(+). Its pathway is cofactor biosynthesis; NAD(+) biosynthesis; NAD(+) from deamido-NAD(+) (ammonia route): step 1/1. Catalyzes the ATP-dependent amidation of deamido-NAD to form NAD. Uses ammonia as a nitrogen source. This Streptococcus mutans serotype c (strain ATCC 700610 / UA159) protein is NH(3)-dependent NAD(+) synthetase.